Here is a 904-residue protein sequence, read N- to C-terminus: Protein translocase subunit SecA (904 aa).

ATP is bound by residues Q87, 105 to 109, and D512; that span reads GEGKT. A disordered region spans residues 851-870; sequence LARQQQLSHQTDNSALMSEE. Zn(2+) is bound by residues C888, C890, C899, and H900.

Belongs to the SecA family. In terms of assembly, monomer and homodimer. Part of the essential Sec protein translocation apparatus which comprises SecA, SecYEG and auxiliary proteins SecDF-YajC and YidC. Zn(2+) serves as cofactor.

It is found in the cell inner membrane. It localises to the cytoplasm. It catalyses the reaction ATP + H2O + cellular proteinSide 1 = ADP + phosphate + cellular proteinSide 2.. Functionally, part of the Sec protein translocase complex. Interacts with the SecYEG preprotein conducting channel. Has a central role in coupling the hydrolysis of ATP to the transfer of proteins into and across the cell membrane, serving both as a receptor for the preprotein-SecB complex and as an ATP-driven molecular motor driving the stepwise translocation of polypeptide chains across the membrane. This chain is Protein translocase subunit SecA, found in Yersinia pseudotuberculosis serotype O:1b (strain IP 31758).